A 55-amino-acid polypeptide reads, in one-letter code: Large ribosomal subunit protein bL33B (55 aa).

It belongs to the bacterial ribosomal protein bL33 family.

The chain is Large ribosomal subunit protein bL33B from Mycobacteroides abscessus (strain ATCC 19977 / DSM 44196 / CCUG 20993 / CIP 104536 / JCM 13569 / NCTC 13031 / TMC 1543 / L948) (Mycobacterium abscessus).